The chain runs to 215 residues: NADH-quinone oxidoreductase subunit C (215 aa).

The protein belongs to the complex I 30 kDa subunit family. NDH-1 is composed of 14 different subunits. Subunits NuoB, C, D, E, F, and G constitute the peripheral sector of the complex.

The protein resides in the cell inner membrane. The catalysed reaction is a quinone + NADH + 5 H(+)(in) = a quinol + NAD(+) + 4 H(+)(out). NDH-1 shuttles electrons from NADH, via FMN and iron-sulfur (Fe-S) centers, to quinones in the respiratory chain. The immediate electron acceptor for the enzyme in this species is believed to be ubiquinone. Couples the redox reaction to proton translocation (for every two electrons transferred, four hydrogen ions are translocated across the cytoplasmic membrane), and thus conserves the redox energy in a proton gradient. The sequence is that of NADH-quinone oxidoreductase subunit C from Methylobacterium radiotolerans (strain ATCC 27329 / DSM 1819 / JCM 2831 / NBRC 15690 / NCIMB 10815 / 0-1).